A 235-amino-acid chain; its full sequence is Octanoyltransferase (235 aa).

Residues 52–229 (KNRQASMIFC…SICSALEYIN (178 aa)) enclose the BPL/LPL catalytic domain. Substrate-binding positions include 89–96 (RGGKITWH), 159–161 (AIG), and 172–174 (GFA). Cysteine 190 serves as the catalytic Acyl-thioester intermediate.

The protein belongs to the LipB family.

Its subcellular location is the cytoplasm. The enzyme catalyses octanoyl-[ACP] + L-lysyl-[protein] = N(6)-octanoyl-L-lysyl-[protein] + holo-[ACP] + H(+). It participates in protein modification; protein lipoylation via endogenous pathway; protein N(6)-(lipoyl)lysine from octanoyl-[acyl-carrier-protein]: step 1/2. Catalyzes the transfer of endogenously produced octanoic acid from octanoyl-acyl-carrier-protein onto the lipoyl domains of lipoate-dependent enzymes. Lipoyl-ACP can also act as a substrate although octanoyl-ACP is likely to be the physiological substrate. The sequence is that of Octanoyltransferase from Tropheryma whipplei (strain Twist) (Whipple's bacillus).